A 359-amino-acid chain; its full sequence is Phospho-N-acetylmuramoyl-pentapeptide-transferase (359 aa).

The next 10 membrane-spanning stretches (helical) occupy residues 3–23 (QILI…PVLI), 55–75 (VAIV…GVVI), 84–104 (GLLV…DDLI), 117–137 (TAKT…ALQF), 156–176 (IATV…VVSA), 190–210 (LAAG…FWQF), 231–251 (LAII…WNAA), 255–275 (IFMG…LSVT), 283–303 (VVLG…ILAF), and 330–350 (VIIR…ALFY).

This sequence belongs to the glycosyltransferase 4 family. MraY subfamily. Mg(2+) serves as cofactor.

The protein resides in the cell membrane. The catalysed reaction is UDP-N-acetyl-alpha-D-muramoyl-L-alanyl-gamma-D-glutamyl-meso-2,6-diaminopimeloyl-D-alanyl-D-alanine + di-trans,octa-cis-undecaprenyl phosphate = di-trans,octa-cis-undecaprenyl diphospho-N-acetyl-alpha-D-muramoyl-L-alanyl-D-glutamyl-meso-2,6-diaminopimeloyl-D-alanyl-D-alanine + UMP. It functions in the pathway cell wall biogenesis; peptidoglycan biosynthesis. Catalyzes the initial step of the lipid cycle reactions in the biosynthesis of the cell wall peptidoglycan: transfers peptidoglycan precursor phospho-MurNAc-pentapeptide from UDP-MurNAc-pentapeptide onto the lipid carrier undecaprenyl phosphate, yielding undecaprenyl-pyrophosphoryl-MurNAc-pentapeptide, known as lipid I. The sequence is that of Phospho-N-acetylmuramoyl-pentapeptide-transferase from Mycolicibacterium vanbaalenii (strain DSM 7251 / JCM 13017 / BCRC 16820 / KCTC 9966 / NRRL B-24157 / PYR-1) (Mycobacterium vanbaalenii).